Here is a 158-residue protein sequence, read N- to C-terminus: Endoribonuclease YbeY (158 aa).

Positions 119, 123, and 129 each coordinate Zn(2+).

It belongs to the endoribonuclease YbeY family. Zn(2+) is required as a cofactor.

The protein resides in the cytoplasm. In terms of biological role, single strand-specific metallo-endoribonuclease involved in late-stage 70S ribosome quality control and in maturation of the 3' terminus of the 16S rRNA. The protein is Endoribonuclease YbeY of Acinetobacter baumannii (strain ACICU).